We begin with the raw amino-acid sequence, 252 residues long: uncharacterized protein (252 aa).

The protein belongs to the methyltransferase superfamily.

This is an uncharacterized protein from Mycobacterium sp. (strain JLS).